Here is a 209-residue protein sequence, read N- to C-terminus: COP9 signalosome complex subunit 8 (209 aa).

The 172-residue stretch at 8-179 (DNAFSFRKLL…GTLDVSLNRF (172 aa)) folds into the PCI domain. Phosphoserine is present on Ser-175.

The protein belongs to the CSN8 family. In terms of assembly, component of the CSN complex, composed of COPS1/GPS1, COPS2, COPS3, COPS4, COPS5, COPS6, COPS7 (COPS7A or COPS7B), COPS8 and COPS9. In the complex, it probably interacts directly with COPS3, COPS4 and COPS7 (COPS7A or COPS7B). Widely expressed.

Its subcellular location is the cytoplasm. It localises to the nucleus. In terms of biological role, component of the COP9 signalosome complex (CSN), a complex involved in various cellular and developmental processes. The CSN complex is an essential regulator of the ubiquitin (Ubl) conjugation pathway by mediating the deneddylation of the cullin subunits of SCF-type E3 ligase complexes, leading to decrease the Ubl ligase activity of SCF-type complexes such as SCF, CSA or DDB2. The complex is also involved in phosphorylation of p53/TP53, c-jun/JUN, IkappaBalpha/NFKBIA, ITPK1 and IRF8/ICSBP, possibly via its association with CK2 and PKD kinases. CSN-dependent phosphorylation of TP53 and JUN promotes and protects degradation by the Ubl system, respectively. This is COP9 signalosome complex subunit 8 (Cops8) from Mus musculus (Mouse).